Here is a 293-residue protein sequence, read N- to C-terminus: ATP phosphoribosyltransferase (293 aa).

This sequence belongs to the ATP phosphoribosyltransferase family. Long subfamily. The cofactor is Mg(2+).

The protein localises to the cytoplasm. The catalysed reaction is 1-(5-phospho-beta-D-ribosyl)-ATP + diphosphate = 5-phospho-alpha-D-ribose 1-diphosphate + ATP. Its pathway is amino-acid biosynthesis; L-histidine biosynthesis; L-histidine from 5-phospho-alpha-D-ribose 1-diphosphate: step 1/9. Feedback inhibited by histidine. Catalyzes the condensation of ATP and 5-phosphoribose 1-diphosphate to form N'-(5'-phosphoribosyl)-ATP (PR-ATP). Has a crucial role in the pathway because the rate of histidine biosynthesis seems to be controlled primarily by regulation of HisG enzymatic activity. The polypeptide is ATP phosphoribosyltransferase (Nitratidesulfovibrio vulgaris (strain DP4) (Desulfovibrio vulgaris)).